Consider the following 221-residue polypeptide: Ribosomal RNA large subunit methyltransferase E (221 aa).

Residues glycine 60, tryptophan 62, aspartate 89, aspartate 105, and aspartate 134 each contribute to the S-adenosyl-L-methionine site. Lysine 174 (proton acceptor) is an active-site residue. A disordered region spans residues 199–221; that stretch reads KPKASRDKSSETFLLGRQLKHPG.

This sequence belongs to the class I-like SAM-binding methyltransferase superfamily. RNA methyltransferase RlmE family.

The protein resides in the cytoplasm. The enzyme catalyses uridine(2552) in 23S rRNA + S-adenosyl-L-methionine = 2'-O-methyluridine(2552) in 23S rRNA + S-adenosyl-L-homocysteine + H(+). Functionally, specifically methylates the uridine in position 2552 of 23S rRNA at the 2'-O position of the ribose in the fully assembled 50S ribosomal subunit. The polypeptide is Ribosomal RNA large subunit methyltransferase E (Ralstonia nicotianae (strain ATCC BAA-1114 / GMI1000) (Ralstonia solanacearum)).